Reading from the N-terminus, the 247-residue chain is UDP-2,3-diacylglucosamine hydrolase (247 aa).

Mn(2+)-binding residues include Asp-8, His-10, Asp-41, Asn-79, and His-114. 79 to 80 contacts substrate; sequence NR. Substrate is bound by residues Asp-122, Ser-160, Asp-171, Arg-174, and His-202. Residues His-202 and His-204 each coordinate Mn(2+).

The protein belongs to the LpxH family. Mn(2+) is required as a cofactor.

It localises to the cell inner membrane. It carries out the reaction UDP-2-N,3-O-bis[(3R)-3-hydroxytetradecanoyl]-alpha-D-glucosamine + H2O = 2-N,3-O-bis[(3R)-3-hydroxytetradecanoyl]-alpha-D-glucosaminyl 1-phosphate + UMP + 2 H(+). The protein operates within glycolipid biosynthesis; lipid IV(A) biosynthesis; lipid IV(A) from (3R)-3-hydroxytetradecanoyl-[acyl-carrier-protein] and UDP-N-acetyl-alpha-D-glucosamine: step 4/6. Hydrolyzes the pyrophosphate bond of UDP-2,3-diacylglucosamine to yield 2,3-diacylglucosamine 1-phosphate (lipid X) and UMP by catalyzing the attack of water at the alpha-P atom. Involved in the biosynthesis of lipid A, a phosphorylated glycolipid that anchors the lipopolysaccharide to the outer membrane of the cell. This is UDP-2,3-diacylglucosamine hydrolase from Xanthomonas axonopodis pv. citri (strain 306).